A 382-amino-acid polypeptide reads, in one-letter code: Succinate--CoA ligase [ADP-forming] subunit beta 1 (382 aa).

The 227-residue stretch at 9-235 (KQIFAKHGIR…ATEEDPLERE (227 aa)) folds into the ATP-grasp domain. ATP contacts are provided by residues Lys45, 52 to 54 (GRG), Glu91, Leu94, and Glu99. Mg(2+)-binding residues include Asn191 and Asp204. Asn255 is a substrate binding site.

This sequence belongs to the succinate/malate CoA ligase beta subunit family. In terms of assembly, heterotetramer of two alpha and two beta subunits. It depends on Mg(2+) as a cofactor.

The catalysed reaction is succinate + ATP + CoA = succinyl-CoA + ADP + phosphate. It catalyses the reaction GTP + succinate + CoA = succinyl-CoA + GDP + phosphate. It participates in carbohydrate metabolism; tricarboxylic acid cycle; succinate from succinyl-CoA (ligase route): step 1/1. Succinyl-CoA synthetase functions in the citric acid cycle (TCA), coupling the hydrolysis of succinyl-CoA to the synthesis of either ATP or GTP and thus represents the only step of substrate-level phosphorylation in the TCA. The beta subunit provides nucleotide specificity of the enzyme and binds the substrate succinate, while the binding sites for coenzyme A and phosphate are found in the alpha subunit. In Archaeoglobus fulgidus (strain ATCC 49558 / DSM 4304 / JCM 9628 / NBRC 100126 / VC-16), this protein is Succinate--CoA ligase [ADP-forming] subunit beta 1.